Consider the following 494-residue polypeptide: Alpha-amylase B (494 aa).

A signal peptide spans Met-1–Ala-18. The residue at position 19 (Gln-19) is a Pyrrolidone carboxylic acid. An intrachain disulfide couples Cys-46 to Cys-102. Asn-116, Arg-165, and Asp-174 together coordinate Ca(2+). An intrachain disulfide couples Cys-153 to Cys-167. Arg-202 contributes to the chloride binding site. The Nucleophile role is filled by Asp-204. Position 208 (His-208) interacts with Ca(2+). The Proton donor role is filled by Glu-241. The chloride site is built by Asn-304 and Arg-343. Disulfide bonds link Cys-376/Cys-382 and Cys-448/Cys-460.

The protein belongs to the glycosyl hydrolase 13 family. As to quaternary structure, monomer. Requires Ca(2+) as cofactor. The cofactor is chloride.

The enzyme catalyses Endohydrolysis of (1-&gt;4)-alpha-D-glucosidic linkages in polysaccharides containing three or more (1-&gt;4)-alpha-linked D-glucose units.. This Drosophila melanogaster (Fruit fly) protein is Alpha-amylase B (Amy-d).